A 137-amino-acid polypeptide reads, in one-letter code: Large ribosomal subunit protein uL16c (137 aa).

The protein belongs to the universal ribosomal protein uL16 family. As to quaternary structure, part of the 50S ribosomal subunit.

The protein localises to the plastid. It localises to the chloroplast. This is Large ribosomal subunit protein uL16c from Bigelowiella natans (Pedinomonas minutissima).